A 116-amino-acid polypeptide reads, in one-letter code: Large ribosomal subunit protein uL23 (116 aa).

Belongs to the universal ribosomal protein uL23 family. Part of the 50S ribosomal subunit. Contacts protein L29, and trigger factor when it is bound to the ribosome.

One of the early assembly proteins it binds 23S rRNA. One of the proteins that surrounds the polypeptide exit tunnel on the outside of the ribosome. Forms the main docking site for trigger factor binding to the ribosome. The sequence is that of Large ribosomal subunit protein uL23 from Psychrobacter arcticus (strain DSM 17307 / VKM B-2377 / 273-4).